The chain runs to 385 residues: Nuclear hormone receptor family member nhr-68 (385 aa).

A DNA-binding region (nuclear receptor) is located at residues 4 to 79 (KEVCLVCQDF…VGMDKTSLQA (76 aa)). 2 consecutive NR C4-type zinc fingers follow at residues 7-27 (CLVCQDFSSGYHYGIPSCNGC) and 43-62 (CQFDQNCPVDKSIRCACRFC). Positions 81 to 110 (RDPIGYTKRNKKTLRHPMNELSGDESNSCT) are disordered. An NR LBD domain is found at 145–384 (PKRSLKQALC…SFAKELIFGD (240 aa)). An AF-2 region spans residues 373 to 384 (FTSFAKELIFGD).

This sequence belongs to the nuclear hormone receptor family.

The protein resides in the nucleus. Functionally, probable transcription factor that acts in a feed-forward loop with nhr-10 to activate genes, including itself, involved in the vitamin B12-independent breakdown of the short-chain fatty acid propionate. This pathway is triggered in response to a diet low in vitamin B12, when canonical vitamin B12-dependent propionate breakdown cannot function; the resulting accumulation of propionate is probably sensed by nhr-68 and/or nhr-10. This is Nuclear hormone receptor family member nhr-68 from Caenorhabditis elegans.